Here is a 230-residue protein sequence, read N- to C-terminus: Small ribosomal subunit protein uS3 (230 aa).

Residues 39-107 (VRKYLADKLQ…PAQINIAEIR (69 aa)) form the KH type-2 domain.

The protein belongs to the universal ribosomal protein uS3 family. In terms of assembly, part of the 30S ribosomal subunit. Forms a tight complex with proteins S10 and S14.

In terms of biological role, binds the lower part of the 30S subunit head. Binds mRNA in the 70S ribosome, positioning it for translation. The protein is Small ribosomal subunit protein uS3 of Shewanella oneidensis (strain ATCC 700550 / JCM 31522 / CIP 106686 / LMG 19005 / NCIMB 14063 / MR-1).